Here is a 189-residue protein sequence, read N- to C-terminus: Putative dihydrofolate reductase (189 aa).

The 183-residue stretch at 3–185 (KMNLIVAMDA…LKFEFCKWKV (183 aa)) folds into the DHFR domain. NADP(+) contacts are provided by residues Ala9 and 15 to 21 (GIGKNGV). 29-34 (DMQYFA) is a binding site for substrate. 53-55 (RKC) serves as a coordination point for NADP(+). Arg69 contacts substrate. NADP(+)-binding positions include 75–77 (SRQ) and 115–122 (GGAEIYDL).

The protein belongs to the dihydrofolate reductase family.

It catalyses the reaction (6S)-5,6,7,8-tetrahydrofolate + NADP(+) = 7,8-dihydrofolate + NADPH + H(+). It participates in cofactor biosynthesis; tetrahydrofolate biosynthesis; 5,6,7,8-tetrahydrofolate from 7,8-dihydrofolate: step 1/1. Functionally, key enzyme in folate metabolism. Catalyzes an essential reaction for de novo glycine and purine synthesis, and for DNA precursor synthesis. This is Putative dihydrofolate reductase (dhfr-1) from Caenorhabditis elegans.